A 440-amino-acid chain; its full sequence is Asparagine--tRNA ligase (440 aa).

This sequence belongs to the class-II aminoacyl-tRNA synthetase family. In terms of assembly, homodimer.

It is found in the cytoplasm. It catalyses the reaction tRNA(Asn) + L-asparagine + ATP = L-asparaginyl-tRNA(Asn) + AMP + diphosphate + H(+). The sequence is that of Asparagine--tRNA ligase from Roseiflexus sp. (strain RS-1).